The following is an 811-amino-acid chain: DNA gyrase subunit A (811 aa).

One can recognise a Topo IIA-type catalytic domain in the interval 30–493; that stretch reads LPDVRDGLKP…LEEDIGKEDL (464 aa). Catalysis depends on Y118, which acts as the O-(5'-phospho-DNA)-tyrosine intermediate. Residues 520–526 carry the GyrA-box motif; that stretch reads QGRGGRG.

This sequence belongs to the type II topoisomerase GyrA/ParC subunit family. As to quaternary structure, heterotetramer, composed of two GyrA and two GyrB chains. In the heterotetramer, GyrA contains the active site tyrosine that forms a transient covalent intermediate with DNA, while GyrB binds cofactors and catalyzes ATP hydrolysis.

Its subcellular location is the cytoplasm. It carries out the reaction ATP-dependent breakage, passage and rejoining of double-stranded DNA.. Functionally, a type II topoisomerase that negatively supercoils closed circular double-stranded (ds) DNA in an ATP-dependent manner to modulate DNA topology and maintain chromosomes in an underwound state. Negative supercoiling favors strand separation, and DNA replication, transcription, recombination and repair, all of which involve strand separation. Also able to catalyze the interconversion of other topological isomers of dsDNA rings, including catenanes and knotted rings. Type II topoisomerases break and join 2 DNA strands simultaneously in an ATP-dependent manner. This is DNA gyrase subunit A from Deinococcus deserti (strain DSM 17065 / CIP 109153 / LMG 22923 / VCD115).